Consider the following 226-residue polypeptide: Orotate phosphoribosyltransferase (226 aa).

5-phospho-alpha-D-ribose 1-diphosphate is bound by residues arginine 107, lysine 108, lysine 111, and 133-141 (EDLTTDGGS). Threonine 137 contacts orotate.

This sequence belongs to the purine/pyrimidine phosphoribosyltransferase family. PyrE subfamily. In terms of assembly, homodimer. Mg(2+) is required as a cofactor.

The enzyme catalyses orotidine 5'-phosphate + diphosphate = orotate + 5-phospho-alpha-D-ribose 1-diphosphate. It functions in the pathway pyrimidine metabolism; UMP biosynthesis via de novo pathway; UMP from orotate: step 1/2. Functionally, catalyzes the transfer of a ribosyl phosphate group from 5-phosphoribose 1-diphosphate to orotate, leading to the formation of orotidine monophosphate (OMP). This is Orotate phosphoribosyltransferase from Ruegeria sp. (strain TM1040) (Silicibacter sp.).